We begin with the raw amino-acid sequence, 352 residues long: C-C chemokine receptor type 5 (352 aa).

The Extracellular portion of the chain corresponds to Met-1–Ala-30. At Tyr-3 the chain carries Sulfotyrosine. Ser-6 and Ser-7 each carry an O-linked (GalNAc...) serine glycan. Sulfotyrosine occurs at positions 10, 14, and 15. Intrachain disulfides connect Cys-20/Cys-269 and Cys-101/Cys-178. Residues Arg-31 to Cys-58 form a helical membrane-spanning segment. The Cytoplasmic portion of the chain corresponds to Lys-59 to Tyr-68. The chain crosses the membrane as a helical span at residues Leu-69 to Tyr-89. Residues Ala-90–Gln-102 are Extracellular-facing. Residues Leu-103–Ile-124 traverse the membrane as a helical segment. Over Asp-125–Thr-141 the chain is Cytoplasmic. Residues Val-142–Phe-166 form a helical membrane-spanning segment. Residues Thr-167–Ile-198 are Extracellular-facing. The helical transmembrane segment at Val-199 to Leu-218 threads the bilayer. Residues Lys-219–Arg-235 lie on the Cytoplasmic side of the membrane. Residues Leu-236 to Phe-260 form a helical membrane-spanning segment. Over Gln-261–Gln-277 the chain is Extracellular. The chain crosses the membrane as a helical span at residues Ala-278–Gly-301. Residues Glu-302 to Leu-352 are Cytoplasmic-facing. S-palmitoyl cysteine attachment occurs at residues Cys-321, Cys-323, and Cys-324. Residues Ser-336, Ser-337, Ser-342, and Ser-349 each carry the phosphoserine; by BARK1 modification.

Belongs to the G-protein coupled receptor 1 family. Interacts with PRAF2. Efficient ligand binding to CCL3/MIP-1alpha and CCL4/MIP-1beta requires sulfation, O-glycosylation and sialic acid modifications. Glycosylation on Ser-6 is required for efficient binding of CCL4. Interacts with GRK2. Interacts with ARRB1 and ARRB2. Interacts with CNIH4. Interacts with S100A4; this interaction stimulates T-lymphocyte chemotaxis. In terms of processing, sulfated on at least 2 of the N-terminal tyrosines. Sulfation is required for efficient binding of the chemokines, CCL3 and CCL4. Post-translationally, palmitoylation in the C-terminal is important for cell surface expression. Phosphorylation on serine residues in the C-terminal is stimulated by binding CC chemokines especially by APO-RANTES. In terms of processing, O-glycosylated, but not N-glycosylated. Ser-6 appears to be the major site even if Ser-7 may be also O-glycosylated. Also sialylated glycans present which contribute to chemokine binding. Thr-16 and Ser-17 may also be glycosylated and, if so, with small moieties such as a T-antigen.

The protein resides in the cell membrane. Functionally, receptor for a number of inflammatory CC-chemokines including CCL3/MIP-1-alpha, CCL4/MIP-1-beta and RANTES and subsequently transduces a signal by increasing the intracellular calcium ion level. May play a role in the control of granulocytic lineage proliferation or differentiation. Participates in T-lymphocyte migration to the infection site by acting as a chemotactic receptor. The polypeptide is C-C chemokine receptor type 5 (CCR5) (Chlorocebus tantalus (Tantalus monkey)).